The primary structure comprises 138 residues: ATP synthase epsilon chain (138 aa).

It belongs to the ATPase epsilon chain family. F-type ATPases have 2 components, CF(1) - the catalytic core - and CF(0) - the membrane proton channel. CF(1) has five subunits: alpha(3), beta(3), gamma(1), delta(1), epsilon(1). CF(0) has three main subunits: a, b and c.

The protein resides in the cell inner membrane. Functionally, produces ATP from ADP in the presence of a proton gradient across the membrane. This Citrifermentans bemidjiense (strain ATCC BAA-1014 / DSM 16622 / JCM 12645 / Bem) (Geobacter bemidjiensis) protein is ATP synthase epsilon chain.